We begin with the raw amino-acid sequence, 243 residues long: uncharacterized protein (243 aa).

Residues 1–18 are compositionally biased toward low complexity; that stretch reads MSNSHYNNYQQQQPHSSN. A disordered region spans residues 1-30; it reads MSNSHYNNYQQQQPHSSNGDPEYQHQQMVH. The AMMECR1 domain occupies 38–232; that stretch reads GHGMKTVAVP…MHYKEYREYQ (195 aa).

This is an uncharacterized protein from Drosophila melanogaster (Fruit fly).